We begin with the raw amino-acid sequence, 453 residues long: Sensor histidine kinase CpxA (453 aa).

Residues 1–4 are Cytoplasmic-facing; it reads MTAR. Residues 5–25 form a helical membrane-spanning segment; the sequence is IFAIFWLTLALVLMLVLMLPK. Over 26–159 the chain is Periplasmic; sequence LDSRQMTELL…SDFINLLFDR (134 aa). The helical transmembrane segment at 160 to 180 threads the bilayer; sequence PLLLLIVTMLVSAPLLLWLAW. Residues 180–233 enclose the HAMP domain; sequence WSLAKPARKLKNAADEVAQGNLRQHPELEAGPQEFLAAGASFNQMVTALERMMT. Topologically, residues 181–453 are cytoplasmic; the sequence is SLAKPARKLK…TIWLPLYKRT (273 aa). Residues 241–451 form the Histidine kinase domain; that stretch reads DISHELRTPL…RLTIWLPLYK (211 aa). Catalysis depends on His-244, which acts as the Nucleophile. Residue His-244 is modified to Phosphohistidine; by autocatalysis. ATP is bound by residues 244–247, 355–360, Asp-382, 401–402, and 412–417; these read HELR, RNALRY, RT, and GTGLGL.

Interacts with cognate response regulator CpxR.

The protein resides in the cell inner membrane. The enzyme catalyses ATP + protein L-histidine = ADP + protein N-phospho-L-histidine.. Its activity is regulated as follows. The two-component system is activated by envelope stress such as overexpression of some (misfolded) periplasmic proteins. Histidine kinase member of the two-component regulatory system CpxA/CpxR which responds to envelope stress response by activating or, in some cases, repressing expression of downstream genes. Activates CpxR by phosphorylation. The polypeptide is Sensor histidine kinase CpxA (Klebsiella pneumoniae subsp. pneumoniae (strain HS11286)).